Here is a 272-residue protein sequence, read N- to C-terminus: Shikimate dehydrogenase (NADP(+)) (272 aa).

Shikimate-binding positions include Ser-14–Ser-16 and Thr-61. Lys-65 acts as the Proton acceptor in catalysis. Glu-77 is a binding site for NADP(+). Shikimate is bound by residues Asn-86 and Asp-102. Residues Gly-126–Ala-130, Asn-149–Arg-154, and Met-213 contribute to the NADP(+) site. A shikimate-binding site is contributed by Tyr-215. Residue Gly-237 participates in NADP(+) binding.

The protein belongs to the shikimate dehydrogenase family. As to quaternary structure, homodimer.

It carries out the reaction shikimate + NADP(+) = 3-dehydroshikimate + NADPH + H(+). The protein operates within metabolic intermediate biosynthesis; chorismate biosynthesis; chorismate from D-erythrose 4-phosphate and phosphoenolpyruvate: step 4/7. Its function is as follows. Involved in the biosynthesis of the chorismate, which leads to the biosynthesis of aromatic amino acids. Catalyzes the reversible NADPH linked reduction of 3-dehydroshikimate (DHSA) to yield shikimate (SA). This chain is Shikimate dehydrogenase (NADP(+)), found in Escherichia coli O157:H7.